Reading from the N-terminus, the 220-residue chain is Antistasin (220 aa).

The first 19 residues, Met1–Ala19, serve as a signal peptide directing secretion. Antistasin-like domains follow at residues Cys21 to Cys46, Cys54 to Cys79, Cys91 to Cys117, Cys120 to Cys145, Cys154 to Cys180, and Cys183 to Cys208.

The protein belongs to the protease inhibitor I15 (antistasin) family. Gland cells. It is more strongly expressed in the head than in the gastric tissue.

It localises to the secreted. In terms of biological role, this highly disulfide-bonded protein is a potent inhibitor of factor Xa. Facilitates digestion of tissues and may also protect the gastric tissues from its own digestive enzymes. May have therapeutic utility as an anticoagulant. Also exhibits a strong metastatic activity. The polypeptide is Antistasin (Hydra vulgaris (Hydra)).